The following is a 28-amino-acid chain: Dermaseptin-H2 (28 aa).

This sequence belongs to the frog skin active peptide (FSAP) family. Dermaseptin subfamily. In terms of tissue distribution, expressed by the skin glands.

It localises to the secreted. Its function is as follows. Possesses a potent antimicrobial activity against Gram-positive and Gram-negative bacteria. Probably acts by disturbing membrane functions with its amphipathic structure. This Pithecopus azureus (Orange-legged monkey tree frog) protein is Dermaseptin-H2.